The following is a 147-amino-acid chain: uncharacterized protein (147 aa).

Residues 1–37 (MVALFKSSLGRPEQHQTPQIRISPASSNVEHSEKQPR) form a disordered region. Residues 15-29 (HQTPQIRISPASSNV) are compositionally biased toward polar residues. Residues 71–147 (PIPVTKEELA…LKTSFVGFLV (77 aa)) enclose the Cytochrome b5 heme-binding domain. 2 residues coordinate heme: H106 and H129.

This sequence belongs to the cytochrome b5 family.

This is an uncharacterized protein from Schizosaccharomyces pombe (strain 972 / ATCC 24843) (Fission yeast).